The primary structure comprises 394 residues: S-adenosylmethionine synthase (394 aa).

Position 16 (H16) interacts with ATP. D18 is a Mg(2+) binding site. E44 lines the K(+) pocket. Residues E57 and Q100 each coordinate L-methionine. Residues Q100 to A110 form a flexible loop region. ATP-binding positions include D172–K174, R239–F240, D248, R254–K255, A271, and K275. Residue D248 coordinates L-methionine. Residue K279 coordinates L-methionine.

This sequence belongs to the AdoMet synthase family. Homotetramer; dimer of dimers. Mg(2+) serves as cofactor. Requires K(+) as cofactor.

The protein localises to the cytoplasm. The catalysed reaction is L-methionine + ATP + H2O = S-adenosyl-L-methionine + phosphate + diphosphate. Its pathway is amino-acid biosynthesis; S-adenosyl-L-methionine biosynthesis; S-adenosyl-L-methionine from L-methionine: step 1/1. Functionally, catalyzes the formation of S-adenosylmethionine (AdoMet) from methionine and ATP. The overall synthetic reaction is composed of two sequential steps, AdoMet formation and the subsequent tripolyphosphate hydrolysis which occurs prior to release of AdoMet from the enzyme. The polypeptide is S-adenosylmethionine synthase (Enterococcus faecalis (strain ATCC 700802 / V583)).